The sequence spans 103 residues: Protamine-2 (103 aa).

Positions 1 to 103 (MVRYRMRSLS…RTRRRRCRRH (103 aa)) are disordered. Residues S8 and S10 each carry the phosphoserine modification. The span at 8 to 17 (SLSERPHEVH) shows a compositional bias: basic and acidic residues. A compositionally biased stretch (low complexity) spans 18 to 29 (GQQVHGQDQGHN). Residues 48–103 (HRGHSHHRRRRCSRRRLHRIHRRRHRSCRRRRRRSCRHRRRHRRGCRTRRRRCRRH) show a composition bias toward basic residues.

This sequence belongs to the protamine P2 family. In terms of assembly, interacts with TDRP. Proteolytic processing into mature chains is required for histone eviction during spermatogenesis. Transition proteins (TNP1 and TNP2) are required for processing. In terms of tissue distribution, testis.

The protein resides in the nucleus. The protein localises to the chromosome. In terms of biological role, protamines substitute for histones in the chromatin of sperm during the haploid phase of spermatogenesis. They compact sperm DNA into a highly condensed, stable and inactive complex. The protein is Protamine-2 (PRM2) of Macaca nemestrina (Pig-tailed macaque).